Here is a 1588-residue protein sequence, read N- to C-terminus: Centrosomal protein of 170 kDa (1588 aa).

Residues 23-73 (IFVGRDDCELMLQSRSVDKQHAVINYDASMDEHLVKDLGSLNGTFVNDVRI) form the FHA domain. Disordered stretches follow at residues 121 to 172 (LSQK…MPRG), 299 to 323 (KFTS…GIQT), 338 to 447 (QNNP…EEPS), and 461 to 508 (SGSL…NPNS). Ser-141 is subject to Phosphoserine. Over residues 155-164 (EALKSEEKPM) the composition is skewed to basic and acidic residues. Residues 347 to 357 (ERTEEDSKSIK) show a composition bias toward basic and acidic residues. A phosphoserine mark is found at Ser-355 and Ser-358. The residue at position 363 (Tyr-363) is a Phosphotyrosine. A compositionally biased stretch (basic and acidic residues) spans 407-418 (KKKAQSTEKHQE). A phosphoserine mark is found at Ser-443, Ser-463, and Ser-494. Thr-498 carries the post-translational modification Phosphothreonine. A phosphoserine mark is found at Ser-568, Ser-577, Ser-628, and Ser-631. The interval 602 to 854 (ELSATVENET…PHINKQNSSV (253 aa)) is disordered. The span at 620 to 631 (LRSTSCTTSLAS) shows a compositional bias: polar residues. Residue Thr-639 is modified to Phosphothreonine. The span at 645-654 (NEEKLLESSR) shows a compositional bias: basic and acidic residues. Ser-662 is subject to Phosphoserine. Basic and acidic residues predominate over residues 663–691 (EIGEKQDTELQEKEAQVYQSEKHDADRGL). Ser-718 is modified (phosphoserine). Residues 720 to 731 (SKEKSETEKETS) show a composition bias toward basic and acidic residues. Thr-752 is modified (phosphothreonine). 2 stretches are compositionally biased toward basic and acidic residues: residues 764-774 (HIDKCREESSK) and 789-821 (SKGD…KESS). The segment covering 822–839 (KSLVRQGSFTIDKPSSNI) has biased composition (polar residues). Phosphoserine occurs at positions 829, 870, and 872. The tract at residues 844–1588 (IPHINKQNSS…GEEEDVTVHE (745 aa)) is targeting to microtubules. Residues 899 to 908 (LREDNNKTDE) show a composition bias toward basic and acidic residues. Disordered regions lie at residues 899–1222 (LRED…RWRR) and 1228–1247 (ASTS…HTRL). Phosphothreonine is present on residues Thr-906 and Thr-912. Residues 913-937 (PSYNRDNSISPESDVDTASTISLVT) show a composition bias toward polar residues. A phosphoserine mark is found at Ser-922, Ser-925, and Ser-950. Residues 967–980 (DVTKSGSREKIEKK) show a composition bias toward basic and acidic residues. Ser-1008 is subject to Phosphoserine. Thr-1012 bears the Phosphothreonine mark. Residues 1028–1038 (IMSSDQETYSC) are compositionally biased toward polar residues. Phosphothreonine is present on Thr-1047. The residue at position 1048 (Ser-1048) is a Phosphoserine. Basic and acidic residues predominate over residues 1049–1062 (ADEHNIHSKLEGGK). A compositionally biased stretch (low complexity) spans 1075–1093 (STSKSTTLPRPRPTRTSLL). Ser-1102, Ser-1104, Ser-1122, Ser-1123, Ser-1135, Ser-1150, and Ser-1155 each carry phosphoserine. The segment at 1103–1588 (DSELADADKA…GEEEDVTVHE (486 aa)) is targeting to centrosomes. Residues 1112 to 1128 (ASVASEVSTTSSTSKPP) show a composition bias toward low complexity. Positions 1158-1173 (EATISRSSASARTAEA) are enriched in low complexity. 8 positions are modified to phosphoserine: Ser-1188, Ser-1195, Ser-1200, Ser-1229, Ser-1231, Ser-1241, Ser-1260, and Ser-1270. Residues 1191-1218 (TRANSISRLSDSKVKSMSSTHGSPSVNS) are compositionally biased toward polar residues. The interval 1315–1334 (SVTSSGTAPSTTVSTAATTP) is disordered. Residue Ser-1362 is modified to Phosphoserine. The tract at residues 1370 to 1398 (PLVHSKTPEGNNGRSVDSRPQPAEHPDHL) is disordered. Residues 1467–1495 (KTSSMEISSILQELKRVEKQLQVINAMID) adopt a coiled-coil conformation. The interval 1511–1540 (AILPSPPKQKSSPVNNHSSPSQTPALCPPE) is disordered. The segment covering 1518-1534 (KQKSSPVNNHSSPSQTP) has biased composition (polar residues). 2 positions are modified to phosphoserine: Ser-1521 and Ser-1522.

This sequence belongs to the CEP170 family. In terms of assembly, interacts with CCDC68 and CCDC120; leading to recruitment to centrosomes. Interacts with PLK1. Interacts with NIN. Interacts with FHDC1. Interacts with CCDC61. Interacts with TBK1; efficient complex formation may be dependent on the presence of CCDC61. Post-translationally, phosphorylated; probably by PLK1.

It is found in the cytoplasm. The protein resides in the cytoskeleton. The protein localises to the microtubule organizing center. Its subcellular location is the centrosome. It localises to the centriole. It is found in the spindle. Functionally, plays a role in microtubule organization. Required for centriole subdistal appendage assembly. This is Centrosomal protein of 170 kDa (Cep170) from Mus musculus (Mouse).